The chain runs to 217 residues: Protein OPI10 homolog (217 aa).

It belongs to the OPI10 family.

The chain is Protein OPI10 homolog from Dictyostelium discoideum (Social amoeba).